The sequence spans 623 residues: tRNA uridine 5-carboxymethylaminomethyl modification enzyme MnmG (623 aa).

10-15 is an FAD binding site; it reads GGGHAG. NAD(+) is bound at residue 269–283; it reads GPRYCPSIEDKIVRF.

The protein belongs to the MnmG family. Homodimer. Heterotetramer of two MnmE and two MnmG subunits. The cofactor is FAD.

The protein resides in the cytoplasm. Its function is as follows. NAD-binding protein involved in the addition of a carboxymethylaminomethyl (cmnm) group at the wobble position (U34) of certain tRNAs, forming tRNA-cmnm(5)s(2)U34. This chain is tRNA uridine 5-carboxymethylaminomethyl modification enzyme MnmG, found in Rhizobium meliloti (strain 1021) (Ensifer meliloti).